The sequence spans 756 residues: 5-methyltetrahydropteroyltriglutamate--homocysteine methyltransferase (756 aa).

5-methyltetrahydropteroyltri-L-glutamate contacts are provided by residues 15 to 18 and K111; that span reads REWK. The interval 392–411 is disordered; sequence GAATSHNLENKKRPQSFNER. Over residues 399-411 the composition is skewed to basic and acidic residues; it reads LENKKRPQSFNER. L-homocysteine-binding positions include 429–431 and E482; that span reads IGS. L-methionine-binding positions include 429 to 431 and E482; that span reads IGS. Residues 513-514 and W559 contribute to the 5-methyltetrahydropteroyltri-L-glutamate site; that span reads RC. Residue D597 coordinates L-homocysteine. Residue D597 coordinates L-methionine. Position 603 (E603) interacts with 5-methyltetrahydropteroyltri-L-glutamate. Residues H639, C641, and E663 each contribute to the Zn(2+) site. H692 functions as the Proton donor in the catalytic mechanism. C724 is a Zn(2+) binding site.

It belongs to the vitamin-B12 independent methionine synthase family. Zn(2+) serves as cofactor.

It catalyses the reaction 5-methyltetrahydropteroyltri-L-glutamate + L-homocysteine = tetrahydropteroyltri-L-glutamate + L-methionine. The protein operates within amino-acid biosynthesis; L-methionine biosynthesis via de novo pathway; L-methionine from L-homocysteine (MetE route): step 1/1. Its function is as follows. Catalyzes the transfer of a methyl group from 5-methyltetrahydrofolate to homocysteine resulting in methionine formation. The polypeptide is 5-methyltetrahydropteroyltriglutamate--homocysteine methyltransferase (Halalkalibacterium halodurans (strain ATCC BAA-125 / DSM 18197 / FERM 7344 / JCM 9153 / C-125) (Bacillus halodurans)).